Here is a 255-residue protein sequence, read N- to C-terminus: MILLLAGTSDARALAVQVKKAGYDVTATVVTDNAAIELQRAEVKVKIGRLTKEDMTDFINEHGVKAIVDASHPFAEEASKNAIGAAAETAIPYIRYERASQAFTYDNMTMVSTYEEAAEVAAEKKGVIMLTTGSKTLQVFTEKLLPLSDVRLVARMLPRLDNMEKCQQLGLPQKNIIAIQGPFTKEFDRALYKQYGVTVMVTKESGKVGSVDKKVEAAKELGLDIIMIGRPKIEYGTVYSTFEEVVHALVNQTRS.

Belongs to the precorrin-6x reductase family.

The catalysed reaction is Co-precorrin-6B + NAD(+) = Co-precorrin-6A + NADH + H(+). The protein operates within cofactor biosynthesis; adenosylcobalamin biosynthesis; cob(II)yrinate a,c-diamide from sirohydrochlorin (anaerobic route): step 7/10. In terms of biological role, catalyzes the reduction of the macrocycle of cobalt-precorrin-6A to cobalt-precorrin-6B. The sequence is that of Cobalt-precorrin-6A reductase (cbiJ) from Priestia megaterium (Bacillus megaterium).